Here is a 67-residue protein sequence, read N- to C-terminus: Major cold shock protein (67 aa).

In terms of domain architecture, CSD spans 4-63; sequence GTVKWFNAEKGFGFISTENGQDVFAHFSAIQTSGFKTLEEGQKVAFDVEEGQRGPQAVNI.

As to quaternary structure, homodimer.

The protein localises to the cytoplasm. This is Major cold shock protein (cspA) from Streptococcus pyogenes serotype M6 (strain ATCC BAA-946 / MGAS10394).